A 1400-amino-acid polypeptide reads, in one-letter code: DNA-directed RNA polymerase subunit beta (1400 aa).

This sequence belongs to the RNA polymerase beta chain family. In terms of assembly, the RNAP catalytic core consists of 2 alpha, 1 beta, 1 beta' and 1 omega subunit. When a sigma factor is associated with the core the holoenzyme is formed, which can initiate transcription.

It carries out the reaction RNA(n) + a ribonucleoside 5'-triphosphate = RNA(n+1) + diphosphate. Functionally, DNA-dependent RNA polymerase catalyzes the transcription of DNA into RNA using the four ribonucleoside triphosphates as substrates. The polypeptide is DNA-directed RNA polymerase subunit beta (Acidiphilium cryptum (strain JF-5)).